We begin with the raw amino-acid sequence, 191 residues long: Large ribosomal subunit protein bL25 (191 aa).

This sequence belongs to the bacterial ribosomal protein bL25 family. CTC subfamily. Part of the 50S ribosomal subunit; part of the 5S rRNA/L5/L18/L25 subcomplex. Contacts the 5S rRNA. Binds to the 5S rRNA independently of L5 and L18.

This is one of the proteins that binds to the 5S RNA in the ribosome where it forms part of the central protuberance. In Nitratidesulfovibrio vulgaris (strain DSM 19637 / Miyazaki F) (Desulfovibrio vulgaris), this protein is Large ribosomal subunit protein bL25.